Consider the following 380-residue polypeptide: Queuine tRNA-ribosyltransferase (380 aa).

Aspartate 95 serves as the catalytic Proton acceptor. Substrate contacts are provided by residues 95–99 (DSGGF), aspartate 149, glutamine 192, and glycine 219. Positions 250 to 256 (GVGSADA) are RNA binding. The Nucleophile role is filled by aspartate 269. The tract at residues 274 to 278 (TRIAR) is RNA binding; important for wobble base 34 recognition. Zn(2+)-binding residues include cysteine 307, cysteine 309, cysteine 312, and histidine 338.

It belongs to the queuine tRNA-ribosyltransferase family. As to quaternary structure, homodimer. Within each dimer, one monomer is responsible for RNA recognition and catalysis, while the other monomer binds to the replacement base PreQ1. Zn(2+) serves as cofactor.

The catalysed reaction is 7-aminomethyl-7-carbaguanine + guanosine(34) in tRNA = 7-aminomethyl-7-carbaguanosine(34) in tRNA + guanine. It participates in tRNA modification; tRNA-queuosine biosynthesis. Catalyzes the base-exchange of a guanine (G) residue with the queuine precursor 7-aminomethyl-7-deazaguanine (PreQ1) at position 34 (anticodon wobble position) in tRNAs with GU(N) anticodons (tRNA-Asp, -Asn, -His and -Tyr). Catalysis occurs through a double-displacement mechanism. The nucleophile active site attacks the C1' of nucleotide 34 to detach the guanine base from the RNA, forming a covalent enzyme-RNA intermediate. The proton acceptor active site deprotonates the incoming PreQ1, allowing a nucleophilic attack on the C1' of the ribose to form the product. After dissociation, two additional enzymatic reactions on the tRNA convert PreQ1 to queuine (Q), resulting in the hypermodified nucleoside queuosine (7-(((4,5-cis-dihydroxy-2-cyclopenten-1-yl)amino)methyl)-7-deazaguanosine). This chain is Queuine tRNA-ribosyltransferase, found in Lactiplantibacillus plantarum (strain ATCC BAA-793 / NCIMB 8826 / WCFS1) (Lactobacillus plantarum).